Consider the following 642-residue polypeptide: Threonine--tRNA ligase (642 aa).

The 61-residue stretch at 1–61 (MPVITLPDGS…ETDSTLSIIT (61 aa)) folds into the TGS domain. Positions 243 to 534 (DHRKIGKQLD…LTEEFAGFFP (292 aa)) are catalytic. 3 residues coordinate Zn(2+): Cys-334, His-385, and His-511.

Belongs to the class-II aminoacyl-tRNA synthetase family. Homodimer. Requires Zn(2+) as cofactor.

The protein localises to the cytoplasm. The catalysed reaction is tRNA(Thr) + L-threonine + ATP = L-threonyl-tRNA(Thr) + AMP + diphosphate + H(+). Catalyzes the attachment of threonine to tRNA(Thr) in a two-step reaction: L-threonine is first activated by ATP to form Thr-AMP and then transferred to the acceptor end of tRNA(Thr). Also edits incorrectly charged L-seryl-tRNA(Thr). This Klebsiella pneumoniae (strain 342) protein is Threonine--tRNA ligase.